The sequence spans 661 residues: Hemocyanin C chain (661 aa).

Cys3 and Cys557 are oxidised to a cystine. Cu cation-binding residues include His200, His204, His230, His350, His354, and His390. Residue Asn476 is glycosylated (N-linked (GlcNAc...) asparagine).

This sequence belongs to the tyrosinase family. Hemocyanin subfamily. Hexamer of a number of different chains, of which A, B, and C have been identified. As to expression, hemolymph.

Its subcellular location is the secreted. It localises to the extracellular space. Functionally, hemocyanins are copper-containing oxygen carriers occurring freely dissolved in the hemolymph of many mollusks and arthropods. The sequence is that of Hemocyanin C chain from Panulirus interruptus (California spiny lobster).